The chain runs to 333 residues: D-alanine--D-alanine ligase (333 aa).

The ATP-grasp domain occupies 124–329 (KMWFSALGIR…FAQYLSGNIM (206 aa)). 154-209 (ALEKWGSIFIKAASQGSSVGCYRVDNKEQLANSLEEAFKYSPYVVVEKTINARELE) serves as a coordination point for ATP. Mg(2+) is bound by residues aspartate 283, glutamate 296, and asparagine 298.

This sequence belongs to the D-alanine--D-alanine ligase family. Mg(2+) serves as cofactor. It depends on Mn(2+) as a cofactor.

The protein resides in the cytoplasm. The catalysed reaction is 2 D-alanine + ATP = D-alanyl-D-alanine + ADP + phosphate + H(+). Its pathway is cell wall biogenesis; peptidoglycan biosynthesis. Its function is as follows. Cell wall formation. This Shewanella halifaxensis (strain HAW-EB4) protein is D-alanine--D-alanine ligase.